Here is a 173-residue protein sequence, read N- to C-terminus: MNMGLFYGSSTCYTEMAAEKIRDILGPELVTLHNLKDDAPALMEQYDVLILGIPTWDFGEIQEDWEAVWEQLDDLNLEGKIVALYGMGDQLGYGEWFLDALGMLHDKLALKGVKFVGYWPTEGYEFTSNKPVIADGQLFVGLALDETNQYDLSDERIQTWCEQILGEMAEHYA.

The Flavodoxin-like domain maps to 3–165 (MGLFYGSSTC…RIQTWCEQIL (163 aa)).

This sequence belongs to the flavodoxin family. It depends on FMN as a cofactor.

Its function is as follows. Low-potential electron donor to a number of redox enzymes. This Salmonella typhi protein is Flavodoxin 2 (fldB).